We begin with the raw amino-acid sequence, 88 residues long: Large ribosomal subunit protein bL31B (88 aa).

This sequence belongs to the bacterial ribosomal protein bL31 family. Type B subfamily. In terms of assembly, part of the 50S ribosomal subunit.

In Corynebacterium glutamicum (strain R), this protein is Large ribosomal subunit protein bL31B.